A 153-amino-acid polypeptide reads, in one-letter code: Deoxyuridine 5'-triphosphate nucleotidohydrolase (153 aa).

Substrate is bound by residues 71-73 (RSG), Asn-84, 88-90 (TID), and Lys-98.

Belongs to the dUTPase family. Requires Mg(2+) as cofactor.

It carries out the reaction dUTP + H2O = dUMP + diphosphate + H(+). Its pathway is pyrimidine metabolism; dUMP biosynthesis; dUMP from dCTP (dUTP route): step 2/2. In terms of biological role, this enzyme is involved in nucleotide metabolism: it produces dUMP, the immediate precursor of thymidine nucleotides and it decreases the intracellular concentration of dUTP so that uracil cannot be incorporated into DNA. In Ehrlichia canis (strain Jake), this protein is Deoxyuridine 5'-triphosphate nucleotidohydrolase.